Consider the following 185-residue polypeptide: Elongation factor P (185 aa).

The protein belongs to the elongation factor P family.

Its subcellular location is the cytoplasm. It participates in protein biosynthesis; polypeptide chain elongation. Its function is as follows. Involved in peptide bond synthesis. Stimulates efficient translation and peptide-bond synthesis on native or reconstituted 70S ribosomes in vitro. Probably functions indirectly by altering the affinity of the ribosome for aminoacyl-tRNA, thus increasing their reactivity as acceptors for peptidyl transferase. In Thermosipho africanus (strain TCF52B), this protein is Elongation factor P.